The sequence spans 657 residues: Translation factor GUF1, mitochondrial (657 aa).

The N-terminal 39 residues, 1 to 39 (MRGCLQSVKWLTSALRPSQSLASSTRYPRRLLSTSAPRN), are a transit peptide targeting the mitochondrion. A tr-type G domain is found at 59–239 (ERFRNFCIVA…TVIEQIPAPV (181 aa)). GTP is bound by residues 68-75 (AHVDHGKS), 132-136 (DTPGH), and 186-189 (NKVD).

This sequence belongs to the TRAFAC class translation factor GTPase superfamily. Classic translation factor GTPase family. LepA subfamily.

It is found in the mitochondrion inner membrane. It catalyses the reaction GTP + H2O = GDP + phosphate + H(+). In terms of biological role, promotes mitochondrial protein synthesis. May act as a fidelity factor of the translation reaction, by catalyzing a one-codon backward translocation of tRNAs on improperly translocated ribosomes. Binds to mitochondrial ribosomes in a GTP-dependent manner. In Ajellomyces capsulatus (strain G186AR / H82 / ATCC MYA-2454 / RMSCC 2432) (Darling's disease fungus), this protein is Translation factor GUF1, mitochondrial.